Consider the following 166-residue polypeptide: Small heat shock protein OV25-2 (166 aa).

Residues 38–149 (LNECNIGNSL…ASRNIPIRAS (112 aa)) enclose the sHSP domain. A disordered region spans residues 140–166 (ASRNIPIRASPKEPEANQKSAINDAKQ).

This sequence belongs to the small heat shock protein (HSP20) family.

In Onchocerca volvulus, this protein is Small heat shock protein OV25-2 (OV25-2).